A 342-amino-acid chain; its full sequence is MKIAVLLSGGVDSSYSAYSLKEQGHELVGIYLKLHASEKKHDLYIKNAQKACEFLGIPLEVLDFQKDFKSAVYDEFISAYEEGQTPNPCALCNPLMKFGLALDHALKLGCEKIATGHYARVKEIDKVSYIQEAVDKTKDQSYFLYALEHEVIAKLVFPLGDLLKKDIKPLALNAMPFLGTLETYKESQEICFVEKSYIDTLKKHVEVEKEGVVKNLQGEVIGTHKGYMQYTIGKRKGFNIKGALEPHFVVGIDAKKNELIVGKKEDLATHSLKAKNKSLTKDFKDGEYFIKARYRSVPAKAFVSLRDEVIEVEFEEPFYGVAKGQALVVYKDDILLGGGVIV.

ATP-binding positions include 6-13 and L32; that span reads LLSGGVDS. The active-site Nucleophile is C92. A disulfide bridge links C92 with C191. Residue G116 participates in ATP binding. An interaction with tRNA region spans residues 138–140; sequence KDQ. C191 functions as the Cysteine persulfide intermediate in the catalytic mechanism. The interval 293 to 294 is interaction with tRNA; sequence RY.

This sequence belongs to the MnmA/TRMU family.

The protein localises to the cytoplasm. It catalyses the reaction S-sulfanyl-L-cysteinyl-[protein] + uridine(34) in tRNA + AH2 + ATP = 2-thiouridine(34) in tRNA + L-cysteinyl-[protein] + A + AMP + diphosphate + H(+). In terms of biological role, catalyzes the 2-thiolation of uridine at the wobble position (U34) of tRNA, leading to the formation of s(2)U34. The sequence is that of tRNA-specific 2-thiouridylase MnmA from Helicobacter pylori (strain HPAG1).